A 50-amino-acid polypeptide reads, in one-letter code: Sperm protamine P1 (50 aa).

It belongs to the protamine P1 family. As to expression, testis.

The protein resides in the nucleus. It is found in the chromosome. Protamines substitute for histones in the chromatin of sperm during the haploid phase of spermatogenesis. They compact sperm DNA into a highly condensed, stable and inactive complex. This is Sperm protamine P1 (PRM1) from Natalus stramineus (Mexican funnel-eared bat).